Reading from the N-terminus, the 453-residue chain is Bifunctional protein GlmU (453 aa).

A pyrophosphorylase region spans residues 1–227 (MNKLSVVILA…LMEVEGVNNR (227 aa)). UDP-N-acetyl-alpha-D-glucosamine is bound by residues 9–12 (LAAG), lysine 23, glutamine 74, 79–80 (GT), 101–103 (YGD), glycine 138, glutamate 152, asparagine 167, and asparagine 225. Aspartate 103 is a binding site for Mg(2+). Asparagine 225 is a binding site for Mg(2+). Residues 228-248 (LQLANLERHFQRKQVEKLLLA) form a linker region. Residues 249–453 (GVTFADPARF…ISNWQRPKRK (205 aa)) form an N-acetyltransferase region. Residues arginine 331 and lysine 349 each contribute to the UDP-N-acetyl-alpha-D-glucosamine site. Histidine 361 (proton acceptor) is an active-site residue. Residues tyrosine 364 and asparagine 375 each contribute to the UDP-N-acetyl-alpha-D-glucosamine site. Residues alanine 378, 384–385 (NY), serine 403, alanine 421, and arginine 438 contribute to the acetyl-CoA site.

In the N-terminal section; belongs to the N-acetylglucosamine-1-phosphate uridyltransferase family. The protein in the C-terminal section; belongs to the transferase hexapeptide repeat family. In terms of assembly, homotrimer. Requires Mg(2+) as cofactor.

It is found in the cytoplasm. It catalyses the reaction alpha-D-glucosamine 1-phosphate + acetyl-CoA = N-acetyl-alpha-D-glucosamine 1-phosphate + CoA + H(+). The catalysed reaction is N-acetyl-alpha-D-glucosamine 1-phosphate + UTP + H(+) = UDP-N-acetyl-alpha-D-glucosamine + diphosphate. Its pathway is nucleotide-sugar biosynthesis; UDP-N-acetyl-alpha-D-glucosamine biosynthesis; N-acetyl-alpha-D-glucosamine 1-phosphate from alpha-D-glucosamine 6-phosphate (route II): step 2/2. It functions in the pathway nucleotide-sugar biosynthesis; UDP-N-acetyl-alpha-D-glucosamine biosynthesis; UDP-N-acetyl-alpha-D-glucosamine from N-acetyl-alpha-D-glucosamine 1-phosphate: step 1/1. It participates in bacterial outer membrane biogenesis; LPS lipid A biosynthesis. Catalyzes the last two sequential reactions in the de novo biosynthetic pathway for UDP-N-acetylglucosamine (UDP-GlcNAc). The C-terminal domain catalyzes the transfer of acetyl group from acetyl coenzyme A to glucosamine-1-phosphate (GlcN-1-P) to produce N-acetylglucosamine-1-phosphate (GlcNAc-1-P), which is converted into UDP-GlcNAc by the transfer of uridine 5-monophosphate (from uridine 5-triphosphate), a reaction catalyzed by the N-terminal domain. This Histophilus somni (strain 129Pt) (Haemophilus somnus) protein is Bifunctional protein GlmU.